We begin with the raw amino-acid sequence, 541 residues long: Phosphatidylethanolamine transferase Mcr-1 (541 aa).

Over 1–14 the chain is Cytoplasmic; that stretch reads MMQHTSVWYRRSVS. Residues 15–35 form a helical membrane-spanning segment; that stretch reads PFVLVASVAVFLTATANLTFF. Residues 36–47 are Periplasmic-facing; the sequence is DKISQTYPIADN. Residues 48 to 68 traverse the membrane as a helical segment; sequence LGFVLTIAVVLFGAMLLITTL. Over 69 to 73 the chain is Cytoplasmic; the sequence is LSSYR. The helical transmembrane segment at 74–94 threads the bilayer; that stretch reads YVLKPVLILLLIMGAVTSYFT. Topologically, residues 95 to 122 are periplasmic; sequence DTYGTVYDTTMLQNALQTDQAETKDLLN. Residues 123–143 traverse the membrane as a helical segment; it reads AAFIMRIIGLGVLPSLLVAFV. The Cytoplasmic segment spans residues 144–157; sequence KVDYPTWGKGLMRR. Residues 158 to 178 traverse the membrane as a helical segment; sequence LGLIVASLALILLPVVAFSSH. The Periplasmic segment spans residues 179–541; the sequence is YASFFRVHKP…KVKDRTAFIR (363 aa). Zn(2+) is bound by residues E246 and T285. 3 disulfides stabilise this stretch: C281-C291, C356-C364, and C414-C422. T285 carries the phosphothreonine modification. Zn(2+) contacts are provided by D465 and H466.

This sequence belongs to the phosphoethanolamine transferase family. As to quaternary structure, monomer. In terms of processing, phosphorylated at Thr-285; may represent an intermediate in the catalytic mechanism.

The protein localises to the cell inner membrane. It catalyses the reaction lipid A (E. coli) + a 1,2-diacyl-sn-glycero-3-phosphoethanolamine + H(+) = lipid A 4'-(2-aminoethyl diphosphate) (E. coli) + a 1,2-diacyl-sn-glycerol. With respect to regulation, EDTA may inhibit activity. May be inhibited by ethanolamine. Its function is as follows. Probably catalyzes the addition of a phosphoethanolamine moiety to lipid A. Phosphoethanolamine modification of lipid A confers polymyxin resistance. Confers resistance to polymyxin-type antibiotics such as colistin; in the E.coli strain W3110. The chain is Phosphatidylethanolamine transferase Mcr-1 (mcr1) from Escherichia coli.